Reading from the N-terminus, the 880-residue chain is Interference hedgehog (880 aa).

A signal peptide spans 1–20; sequence MPSIVSSLLLVVLLTSPLGA. At 21–703 the chain is on the extracellular side; sequence IPVLYPSPPP…SHNETFSMSP (683 aa). Ig-like C2-type domains follow at residues 37–142, 154–235, 251–339, and 345–432; these read PGVR…TARL, PVTS…STSS, PYLL…FIQV, and PQIV…LQVT. 4 disulfides stabilise this stretch: cysteine 60–cysteine 126, cysteine 172–cysteine 219, cysteine 275–cysteine 323, and cysteine 366–cysteine 414. Asparagine 79, asparagine 102, and asparagine 208 each carry an N-linked (GlcNAc...) asparagine glycan. The disordered stretch occupies residues 435–468; sequence PIHSESTQQSDHNHSKANRGRRPAQMIPPSAPNV. N-linked (GlcNAc...) asparagine glycosylation is found at asparagine 447 and asparagine 467. Fibronectin type-III domains are found at residues 462–570 and 578–673; these read PPSA…LQPG and VPEM…TQRP. Heparin contacts are provided by arginine 498, lysine 504, lysine 506, and arginine 544. Asparagine 560 is a glycosylation site (N-linked (GlcNAc...) asparagine). The disordered stretch occupies residues 665-699; sequence LKQGRTQRPMVSTTEEATLQTGVRDTTTPSHNETF. The span at 668 to 699 shows a compositional bias: polar residues; the sequence is GRTQRPMVSTTEEATLQTGVRDTTTPSHNETF. Residue asparagine 696 is glycosylated (N-linked (GlcNAc...) asparagine). Residues 704 to 724 traverse the membrane as a helical segment; that stretch reads IVTGTIGGGAVLILFVVTTCL. Over 725-880 the chain is Cytoplasmic; it reads CMWRRRNSRA…SSGSLNSVGV (156 aa). Positions 797-880 are disordered; it reads YFQRQPTYDY…SSGSLNSVGV (84 aa). 2 stretches are compositionally biased toward low complexity: residues 827-839 and 864-880; these read RAGS…NNLN and SSRS…SVGV.

This sequence belongs to the immunoglobulin superfamily. IHOG family. As to quaternary structure, homodimer. Heterotetramer; 2 iHog chains bind 2 hh chains when facilitated by heparin, heparin is required to promote high-affinity interactions between hh and iHog.

Its subcellular location is the membrane. In terms of biological role, mediates response to the active Hedgehog (Hh) protein signal in embryos, functioning upstream or at the level of patched (ptc). This chain is Interference hedgehog, found in Drosophila ananassae (Fruit fly).